The sequence spans 273 residues: Putative pyruvate, phosphate dikinase regulatory protein (273 aa).

153–160 is a binding site for ADP; it reads GISRTSKT.

The protein belongs to the pyruvate, phosphate/water dikinase regulatory protein family. PDRP subfamily.

The enzyme catalyses N(tele)-phospho-L-histidyl/L-threonyl-[pyruvate, phosphate dikinase] + ADP = N(tele)-phospho-L-histidyl/O-phospho-L-threonyl-[pyruvate, phosphate dikinase] + AMP + H(+). The catalysed reaction is N(tele)-phospho-L-histidyl/O-phospho-L-threonyl-[pyruvate, phosphate dikinase] + phosphate + H(+) = N(tele)-phospho-L-histidyl/L-threonyl-[pyruvate, phosphate dikinase] + diphosphate. In terms of biological role, bifunctional serine/threonine kinase and phosphorylase involved in the regulation of the pyruvate, phosphate dikinase (PPDK) by catalyzing its phosphorylation/dephosphorylation. This chain is Putative pyruvate, phosphate dikinase regulatory protein, found in Agrobacterium fabrum (strain C58 / ATCC 33970) (Agrobacterium tumefaciens (strain C58)).